Reading from the N-terminus, the 237-residue chain is Small ribosomal subunit protein eS4 (237 aa).

An S4 RNA-binding domain is found at 37-99 (VPLLIVLRDV…REEYYRIFPD (63 aa)).

This sequence belongs to the eukaryotic ribosomal protein eS4 family.

The protein is Small ribosomal subunit protein eS4 of Natronomonas pharaonis (strain ATCC 35678 / DSM 2160 / CIP 103997 / JCM 8858 / NBRC 14720 / NCIMB 2260 / Gabara) (Halobacterium pharaonis).